The chain runs to 525 residues: MSKSNSMNSTSHETLFQQLVLGLDRMPLMDVHWLIYVAFGAWLCSYVIHVLSSSSTVKVPVVGYRSVFEPTWLLRLRFVWEGGSIIGQGYNKFKDSIFQVRKLGTDIVIIPPNYIDEVRKLSQDKTRSVEPFINDFAGQYTRGMVFLQSDLQNRVIQQRLTPKLVSLTKVMKEELDYALTKEMPDMKNDEWVEVDISSIMVRLISRISARVFLGPEHCRNQEWLTTTAEYSESLFITGFILRVVPHILRPFIAPLLPSYRTLLRNVSSGRRVIGDIIRSQQGDGNEDILSWMRDAATGEEKQIDNIAQRMLILSLASIHTTAMTMTHAMYDLCACPEYIEPLRDEVKSVVGASGWDKTALNRFHKLDSFLKESQRFNPVFLLTFNRIYHQSMTLSDGTNIPSGTRIAVPSHAMLQDSAHVPGPTPPTEFDGFRYSKIRSDSNYAQKYLFSMTDSSNMAFGYGKYACPGRFYASNEMKLTLAILLLQFEFKLPDGKGRPRNITIDSDMIPDPRARLCVRKRSLRDE.

The chain crosses the membrane as a helical span at residues 31 to 51; it reads VHWLIYVAFGAWLCSYVIHVL. Position 466 (Cys466) interacts with heme.

It belongs to the cytochrome P450 family. The cofactor is heme.

It localises to the membrane. The enzyme catalyses ent-kaur-16-ene + 3 reduced [NADPH--hemoprotein reductase] + 3 O2 = ent-kaur-16-en-19-oate + 3 oxidized [NADPH--hemoprotein reductase] + 4 H2O + 4 H(+). It functions in the pathway plant hormone biosynthesis; gibberellin biosynthesis. Functionally, catalyzes three successive oxidations of the 4-methyl group of ent-kaurene giving kaurenoic acid, a key step in gibberellin (GA) biosynthesis. This chain is Ent-kaurene oxidase (CYP503A1), found in Fusarium fujikuroi (Bakanae and foot rot disease fungus).